We begin with the raw amino-acid sequence, 66 residues long: uncharacterized protein (66 aa).

Helical transmembrane passes span 6–26 (KIIM…HFVG) and 39–59 (VTFF…SILL).

It is found in the cell membrane. This is an uncharacterized protein from Bacillus subtilis (strain 168).